Here is a 407-residue protein sequence, read N- to C-terminus: Chorismate synthase (407 aa).

Arg-40 and Arg-46 together coordinate NADP(+). FMN is bound by residues Arg-140–Ser-142, Gln-261–Ala-262, Gly-305, Lys-320–Thr-324, and Arg-346.

It belongs to the chorismate synthase family. Homotetramer. FMNH2 is required as a cofactor.

It catalyses the reaction 5-O-(1-carboxyvinyl)-3-phosphoshikimate = chorismate + phosphate. Its pathway is metabolic intermediate biosynthesis; chorismate biosynthesis; chorismate from D-erythrose 4-phosphate and phosphoenolpyruvate: step 7/7. In terms of biological role, catalyzes the anti-1,4-elimination of the C-3 phosphate and the C-6 proR hydrogen from 5-enolpyruvylshikimate-3-phosphate (EPSP) to yield chorismate, which is the branch point compound that serves as the starting substrate for the three terminal pathways of aromatic amino acid biosynthesis. This reaction introduces a second double bond into the aromatic ring system. This is Chorismate synthase from Corynebacterium glutamicum (strain R).